The chain runs to 348 residues: AT-hook motif nuclear-localized protein 9 (348 aa).

The disordered stretch occupies residues 18–156 (HRGLSGSGPP…MASVGELMPS (139 aa)). Polar residues predominate over residues 31–46 (GSPQQQQGLRHLPNQN). Residues 47-60 (SPFGSGSTGFGSPS) are compositionally biased toward low complexity. The Bipartite nuclear localization signal motif lies at 98-106 (KRKRGRPRK). Residues 98–110 (KRKRGRPRKYGQD) constitute a DNA-binding region (a.T hook 1). The span at 112–131 (SVSLALSSSSVSTITPNNSN) shows a compositional bias: low complexity. Residues 132-144 (KRGRGRPPGSGKK) constitute a DNA-binding region (a.T hook 2). The PPC domain maps to 157 to 299 (SSGMSFTPHV…EEEASEVVQE (143 aa)).

Its subcellular location is the nucleus. Functionally, transcription factor that specifically binds AT-rich DNA sequences related to the nuclear matrix attachment regions (MARs). The chain is AT-hook motif nuclear-localized protein 9 from Arabidopsis thaliana (Mouse-ear cress).